A 131-amino-acid polypeptide reads, in one-letter code: Methylglyoxal synthase (131 aa).

In terms of domain architecture, MGS-like spans 1–131 (MKIALIAHDK…GDLDYRKFRK (131 aa)). Substrate contacts are provided by residues H8, K12, 34-37 (TGTT), and 54-55 (SG). D60 functions as the Proton donor/acceptor in the catalytic mechanism. H87 is a substrate binding site.

The protein belongs to the methylglyoxal synthase family.

It carries out the reaction dihydroxyacetone phosphate = methylglyoxal + phosphate. Catalyzes the formation of methylglyoxal from dihydroxyacetone phosphate. In Bacillus cytotoxicus (strain DSM 22905 / CIP 110041 / 391-98 / NVH 391-98), this protein is Methylglyoxal synthase.